The sequence spans 94 residues: Protein S100-A1 (94 aa).

Residue G2 is modified to Blocked amino end (Gly). 2 EF-hand domains span residues 13–48 (INVF…FLDA) and 50–85 (KDAD…LTVA). Residues K28, E33, D63, N65, D67, E69, and E74 each coordinate Ca(2+). C86 is subject to S-nitrosocysteine.

It belongs to the S-100 family. As to quaternary structure, dimer of either two alpha chains, or two beta chains, or one alpha and one beta chain. Also forms heterodimers with S100P. Interacts with AGER. Interacts with CAPZA1. Interacts with FKBP4. Interacts with RYR1 and RYR2. Interacts with CACYBP in a calcium-dependent manner. Interacts with PPP5C (via TPR repeats); the interaction is calcium-dependent and modulates PPP5C activity. Interacts with ATP2A2 and PLN in a Ca(2+)-dependent manner. Interacts with mitochondrial F1-ATPase subunits ATP5F1A and ATP5F1B; these interactions increase F1-ATPase activity. Post-translationally, glutathionylated; glutathionylation increases affinity to calcium about 10-fold. As to expression, although predominant among the water-soluble brain proteins, S100 is also found in a variety of other tissues.

It localises to the cytoplasm. The protein resides in the sarcoplasmic reticulum. Its subcellular location is the mitochondrion. In terms of biological role, small calcium binding protein that plays important roles in several biological processes such as Ca(2+) homeostasis, chondrocyte biology and cardiomyocyte regulation. In response to an increase in intracellular Ca(2+) levels, binds calcium which triggers conformational changes. These changes allow interactions with specific target proteins and modulate their activity. Regulates a network in cardiomyocytes controlling sarcoplasmic reticulum Ca(2+) cycling and mitochondrial function through interaction with the ryanodine receptors RYR1 and RYR2, sarcoplasmic reticulum Ca(2+)-ATPase/ATP2A2 and mitochondrial F1-ATPase. Facilitates diastolic Ca(2+) dissociation and myofilament mechanics in order to improve relaxation during diastole. This chain is Protein S100-A1 (S100A1), found in Bos taurus (Bovine).